Consider the following 230-residue polypeptide: ATP phosphoribosyltransferase (230 aa).

This sequence belongs to the ATP phosphoribosyltransferase family. Short subfamily. In terms of assembly, heteromultimer composed of HisG and HisZ subunits.

It is found in the cytoplasm. The enzyme catalyses 1-(5-phospho-beta-D-ribosyl)-ATP + diphosphate = 5-phospho-alpha-D-ribose 1-diphosphate + ATP. It functions in the pathway amino-acid biosynthesis; L-histidine biosynthesis; L-histidine from 5-phospho-alpha-D-ribose 1-diphosphate: step 1/9. Its function is as follows. Catalyzes the condensation of ATP and 5-phosphoribose 1-diphosphate to form N'-(5'-phosphoribosyl)-ATP (PR-ATP). Has a crucial role in the pathway because the rate of histidine biosynthesis seems to be controlled primarily by regulation of HisG enzymatic activity. The protein is ATP phosphoribosyltransferase of Agrobacterium fabrum (strain C58 / ATCC 33970) (Agrobacterium tumefaciens (strain C58)).